Here is a 384-residue protein sequence, read N- to C-terminus: MAKHLFTSESVSEGHPDKIADQISDAVLDAILEQDPKARVACETYVKTGMVLVGGEITTSAWVDIEEITRNTVREIGYVHSDMGFDANSCAVLSAIGKQSPDINQGVDRADPLEQGAGDQGLMFGYATNETDVLMPAPITYAHRLVQRQAEVRKNGTLPWLRPDAKSQVTFQYDDGKIVGIDAVVLSTQHSEEIDQKSLQEAVMEEIIKPILPAEWLTSATKFFINPTGRFVIGGPMGDCGLTGRKIIVDTYGGMARHGGGAFSGKDPSKVDRSAAYAARYVAKNIVAAGLADRCEIQVSYAIGVAEPTSIMVETFGTEKVPSEQLTLLVREFFDLRPYGLIQMLDLLHPIYKETAAYGHFGREHFPWEKTDKAQLLRDAAGLK.

ATP is bound at residue histidine 15. Aspartate 17 contributes to the Mg(2+) binding site. Glutamate 43 lines the K(+) pocket. The L-methionine site is built by glutamate 56 and glutamine 99. A flexible loop region spans residues 99–109 (QSPDINQGVDR). ATP-binding positions include 164–166 (DAK), 230–231 (RF), aspartate 239, 245–246 (RK), alanine 262, and lysine 266. Aspartate 239 provides a ligand contact to L-methionine. L-methionine is bound at residue lysine 270.

This sequence belongs to the AdoMet synthase family. In terms of assembly, homotetramer; dimer of dimers. Requires Mg(2+) as cofactor. It depends on K(+) as a cofactor.

It is found in the cytoplasm. It carries out the reaction L-methionine + ATP + H2O = S-adenosyl-L-methionine + phosphate + diphosphate. The protein operates within amino-acid biosynthesis; S-adenosyl-L-methionine biosynthesis; S-adenosyl-L-methionine from L-methionine: step 1/1. Its function is as follows. Catalyzes the formation of S-adenosylmethionine (AdoMet) from methionine and ATP. The overall synthetic reaction is composed of two sequential steps, AdoMet formation and the subsequent tripolyphosphate hydrolysis which occurs prior to release of AdoMet from the enzyme. The protein is S-adenosylmethionine synthase of Escherichia coli (strain K12 / DH10B).